A 327-amino-acid chain; its full sequence is Olfactory receptor 9G4 (327 aa).

Topologically, residues 1-43 are extracellular; that stretch reads MIFPSHDSQAFTSVDMEVGNCTILTEFILLGFSADSQWQPILF. Asn20 carries N-linked (GlcNAc...) asparagine glycosylation. Residues 44 to 64 form a helical membrane-spanning segment; it reads GVFLMLYLITLSGNMTLVILI. The Cytoplasmic portion of the chain corresponds to 65 to 71; sequence RTDSHLH. The helical transmembrane segment at 72-92 threads the bilayer; sequence TPMYFFIGNLSFLDFWYTSVY. Topologically, residues 93–113 are extracellular; that stretch reads TPKILASCVSEDKRISLAGCG. Cys112 and Cys194 form a disulfide bridge. Residues 114-134 form a helical membrane-spanning segment; sequence AQLFFSCVVAYTECYLLAAMA. The Cytoplasmic portion of the chain corresponds to 135 to 152; it reads YDRHAAICNPLLYSGTMS. The helical transmembrane segment at 153–173 threads the bilayer; that stretch reads TALCTGLVAGSYIGGFLNAIA. Topologically, residues 174 to 212 are extracellular; sequence HTANTFRLHFCGKNIIDHFFCDAPPLVKMSCTNTRVYEK. A helical transmembrane segment spans residues 213-233; that stretch reads VLLGVVGFTVLSSILAILISY. At 234 to 252 the chain is on the cytoplasmic side; sequence VNILLAILRIHSASGRHKA. Residues 253 to 273 traverse the membrane as a helical segment; it reads FSTCASHLISVMLFYGSLLFM. The Extracellular segment spans residues 274–286; the sequence is YSRPSSTYSLERD. Residues 287–307 form a helical membrane-spanning segment; sequence KVAALFYTVINPLLNPLIYSL. Residues 308 to 327 are Cytoplasmic-facing; sequence RNKDIKEAFRKATQTIQPQT.

It belongs to the G-protein coupled receptor 1 family.

The protein resides in the cell membrane. In terms of biological role, odorant receptor. This Homo sapiens (Human) protein is Olfactory receptor 9G4 (OR9G4).